The following is a 448-amino-acid chain: Trigger factor (448 aa).

Residues 172-257 (GDRVTVDFVG…MKKIEWPHLP (86 aa)) form the PPIase FKBP-type domain.

This sequence belongs to the FKBP-type PPIase family. Tig subfamily.

The protein resides in the cytoplasm. It catalyses the reaction [protein]-peptidylproline (omega=180) = [protein]-peptidylproline (omega=0). Involved in protein export. Acts as a chaperone by maintaining the newly synthesized protein in an open conformation. Functions as a peptidyl-prolyl cis-trans isomerase. The chain is Trigger factor from Burkholderia cenocepacia (strain HI2424).